The primary structure comprises 270 residues: Thiamine thiazole synthase (270 aa).

NAD(+)-binding positions include Ala39, 58–59 (EQ), Gly66, and Leu130. The residue at position 159 (Cys159) is a 2,3-didehydroalanine (Cys). Position 161 (Asp161) interacts with NAD(+). Positions 161 and 176 each coordinate Fe cation. Ile223 lines the NAD(+) pocket. Residue Arg233 coordinates glycine.

The protein belongs to the THI4 family. In terms of assembly, homooctamer; tetramer of dimers. Fe(2+) is required as a cofactor. During the catalytic reaction, a sulfide is transferred from Cys-159 to a reaction intermediate, generating a dehydroalanine residue.

It carries out the reaction [ADP-thiazole synthase]-L-cysteine + glycine + NAD(+) = [ADP-thiazole synthase]-dehydroalanine + ADP-5-ethyl-4-methylthiazole-2-carboxylate + nicotinamide + 3 H2O + 2 H(+). It participates in cofactor biosynthesis; thiamine diphosphate biosynthesis. Functionally, involved in biosynthesis of the thiamine precursor thiazole. Catalyzes the conversion of NAD and glycine to adenosine diphosphate 5-(2-hydroxyethyl)-4-methylthiazole-2-carboxylic acid (ADT), an adenylated thiazole intermediate. The reaction includes an iron-dependent sulfide transfer from a conserved cysteine residue of the protein to a thiazole intermediate. The enzyme can only undergo a single turnover, which suggests it is a suicide enzyme. This Aeropyrum pernix (strain ATCC 700893 / DSM 11879 / JCM 9820 / NBRC 100138 / K1) protein is Thiamine thiazole synthase.